Here is a 368-residue protein sequence, read N- to C-terminus: MKILVALSGGVDSAVSAKILKDAGYEIEGCYMKLHGRDDYHAKNIEKVQDVGNFLEIKTHILDLCDDFKREVFEPFLQTYKVGKTPNPCALCNRTIKFGKFLDFARSKGCDKIATGHYAKIENNLIKSAVDLSKDQSYFLANIEPRVIPNIVFPLGNMLKKDVKKFAASFPELEKISKSSESNEICFVENTYIDVLREFYKTETPGIVRNLQGEIVGKHNGYMNFTVGKRRGFDVFGAHEPHYVVKIDAKKNEIVVGSKADLDKNEFETQNFNAFLNIDEILKMDEIYVKIRYRSAKIACKIEISLNDNLNNESLTDKNLNFENSDFLNNQDLKAKIILKTPANGVASGQLAVFYDKSDCVIASGFIA.

Residues Ala-6–Ser-13 and Met-32 each bind ATP. The Nucleophile role is filled by Cys-92. A disulfide bridge links Cys-92 with Cys-186. Gly-116 serves as a coordination point for ATP. The interaction with tRNA stretch occupies residues Lys-134–Gln-136. Residue Cys-186 is the Cysteine persulfide intermediate of the active site. Residues Arg-292–Tyr-293 are interaction with tRNA.

This sequence belongs to the MnmA/TRMU family.

The protein localises to the cytoplasm. The enzyme catalyses S-sulfanyl-L-cysteinyl-[protein] + uridine(34) in tRNA + AH2 + ATP = 2-thiouridine(34) in tRNA + L-cysteinyl-[protein] + A + AMP + diphosphate + H(+). Catalyzes the 2-thiolation of uridine at the wobble position (U34) of tRNA, leading to the formation of s(2)U34. The polypeptide is tRNA-specific 2-thiouridylase MnmA (Campylobacter hominis (strain ATCC BAA-381 / DSM 21671 / CCUG 45161 / LMG 19568 / NCTC 13146 / CH001A)).